Reading from the N-terminus, the 330-residue chain is Solute-binding protein NAS141_03721 (330 aa).

An N-terminal signal peptide occupies residues 1 to 27 (MSFFTKTAQLVSGAAVAATLFTATAQA). Residues E75, N97, R153, R173, Y196, 213-214 (NE), and R240 each bind alpha-D-mannuronate. Alpha-D-taluronate-binding positions include E75, N97, R153, R173, Y196, 213–214 (NE), and R240.

This sequence belongs to the bacterial solute-binding protein 7 family. As to quaternary structure, the complex is comprised of an extracytoplasmic solute-binding protein and a heteromeric permease formed by two transmembrane proteins.

It localises to the periplasm. Its function is as follows. Solute-binding protein that binds D-mannuronate and D-taluronate (in vitro). Probably part of a tripartite ATP-independent periplasmic (TRAP) transport system that mediates solute transport into the cytoplasm. The sequence is that of Solute-binding protein NAS141_03721 from Sulfitobacter sp. (strain NAS-14.1).